The sequence spans 240 residues: 31 kDa outer-membrane immunogenic protein (240 aa).

A signal peptide spans 1–19 (MKSVILASIAAMFATSAMA). An epitope recognized by the monoclonal antibody A59/10F09/G10 region spans residues 48 to 83 (NAGYAGGKFKHPFSSFDKEDNEQVSGSLDVTAGGFV).

This sequence belongs to the Omp25/RopB family. In terms of assembly, oligomeric.

The protein resides in the cell outer membrane. Its function is as follows. Major outer membrane protein associated with peptidoglycans. May function as a porin. The protein is 31 kDa outer-membrane immunogenic protein (omp31) of Brucella melitensis biotype 1 (strain ATCC 23456 / CCUG 17765 / NCTC 10094 / 16M).